Here is a 294-residue protein sequence, read N- to C-terminus: MPRGDSEQVRYCARFSYLWLKFSLVIYSTVFWLIGGLVLSVGIYAEVERQKYKTLESAFLAPAIILILLGVVMFIVSFIGVLASLRDNLCLLQAFMYILGICLIIELIGGVVALIFRNQTIDFLNDNIRRGIENYYDDLDFKNIMDFVQKEFKCCGGEDYRDWSKNQYHDCRAPGPLACGVPYTCCFRNTTEVVNTMCGYKTIDKERLSVQNVIYVRGCTNAVLMWFTDNYTIMAGVLLGILLPQFLGVLLTFLYITRVEDIITEHSVTDGLLGPGTKAGVEAAGTGCCMCYPI.

Residues 1–23 (MPRGDSEQVRYCARFSYLWLKFS) are Cytoplasmic-facing. The chain crosses the membrane as a helical span at residues 24-44 (LVIYSTVFWLIGGLVLSVGIY). Over 45 to 62 (AEVERQKYKTLESAFLAP) the chain is Extracellular. Residues 63–83 (AIILILLGVVMFIVSFIGVLA) traverse the membrane as a helical segment. The Cytoplasmic portion of the chain corresponds to 84–93 (SLRDNLCLLQ). A helical membrane pass occupies residues 94 to 114 (AFMYILGICLIIELIGGVVAL). Residues 115–235 (IFRNQTIDFL…WFTDNYTIMA (121 aa)) are Extracellular-facing. A glycan (N-linked (GlcNAc...) asparagine) is linked at N118. 4 disulfide bridges follow: C154–C219, C155–C185, C171–C179, and C186–C198. N-linked (GlcNAc...) asparagine glycosylation is found at N189 and N230. A helical transmembrane segment spans residues 236 to 256 (GVLLGILLPQFLGVLLTFLYI). Residues 257 to 294 (TRVEDIITEHSVTDGLLGPGTKAGVEAAGTGCCMCYPI) are Cytoplasmic-facing.

Belongs to the tetraspanin (TM4SF) family. Interacts with ADAM10; the interaction influences ADAM10 substrate specificity, endocytosis and turnover. In terms of processing, palmitoylated.

It localises to the cell membrane. The protein resides in the late endosome membrane. Part of TspanC8 subgroup, composed of 6 members that interact with the transmembrane metalloprotease ADAM10. This interaction is required for ADAM10 exit from the endoplasmic reticulum and for enzymatic maturation and trafficking to the cell surface as well as substrate specificity. Different TspanC8/ADAM10 complexes have distinct substrates. Promotes ADAM10-mediated cleavage of CDH2. Negatively regulates ligand-induced Notch activity probably by regulating ADAM10 activity. The sequence is that of Tetraspanin-15 (TSPAN15) from Bos taurus (Bovine).